The following is a 264-amino-acid chain: uncharacterized protein (264 aa).

15–22 lines the ATP pocket; that stretch reads KGGTGKTT.

This sequence belongs to the ParA family. MinD subfamily.

This is an uncharacterized protein from Methanocaldococcus jannaschii (strain ATCC 43067 / DSM 2661 / JAL-1 / JCM 10045 / NBRC 100440) (Methanococcus jannaschii).